Consider the following 274-residue polypeptide: uncharacterized protein (274 aa).

It belongs to the PhoU family.

This is an uncharacterized protein from Deinococcus radiodurans (strain ATCC 13939 / DSM 20539 / JCM 16871 / CCUG 27074 / LMG 4051 / NBRC 15346 / NCIMB 9279 / VKM B-1422 / R1).